Consider the following 552-residue polypeptide: Terpene synthase 5 (552 aa).

Asp307, Asp311, and Glu457 together coordinate Mg(2+). A DDXXD motif motif is present at residues Asp307–Asp311.

The protein belongs to the terpene synthase family. The cofactor is Mg(2+).

In terms of biological role, catalyzes the cyclization of farnesyl diphosphate to multiple sesquiterpenes, such as olefins and sesquiterpene alcohols. The protein is Terpene synthase 5 (TPS5) of Ricinus communis (Castor bean).